A 415-amino-acid polypeptide reads, in one-letter code: Gamma-glutamyl phosphate reductase (415 aa).

This sequence belongs to the gamma-glutamyl phosphate reductase family.

Its subcellular location is the cytoplasm. The enzyme catalyses L-glutamate 5-semialdehyde + phosphate + NADP(+) = L-glutamyl 5-phosphate + NADPH + H(+). The protein operates within amino-acid biosynthesis; L-proline biosynthesis; L-glutamate 5-semialdehyde from L-glutamate: step 2/2. Catalyzes the NADPH-dependent reduction of L-glutamate 5-phosphate into L-glutamate 5-semialdehyde and phosphate. The product spontaneously undergoes cyclization to form 1-pyrroline-5-carboxylate. The polypeptide is Gamma-glutamyl phosphate reductase (Mycobacterium sp. (strain JLS)).